A 280-amino-acid polypeptide reads, in one-letter code: 2-dehydro-3-deoxyphosphooctonate aldolase (280 aa).

The protein belongs to the KdsA family.

It localises to the cytoplasm. The catalysed reaction is D-arabinose 5-phosphate + phosphoenolpyruvate + H2O = 3-deoxy-alpha-D-manno-2-octulosonate-8-phosphate + phosphate. The protein operates within carbohydrate biosynthesis; 3-deoxy-D-manno-octulosonate biosynthesis; 3-deoxy-D-manno-octulosonate from D-ribulose 5-phosphate: step 2/3. It functions in the pathway bacterial outer membrane biogenesis; lipopolysaccharide biosynthesis. The protein is 2-dehydro-3-deoxyphosphooctonate aldolase of Thiobacillus denitrificans (strain ATCC 25259 / T1).